A 317-amino-acid chain; its full sequence is Acetyl-coenzyme A carboxylase carboxyl transferase subunit alpha (317 aa).

The 262-residue stretch at 33–294 (NLDDEITRLQ…KKRLLADLAD (262 aa)) folds into the CoA carboxyltransferase C-terminal domain.

It belongs to the AccA family. Acetyl-CoA carboxylase is a heterohexamer composed of biotin carboxyl carrier protein (AccB), biotin carboxylase (AccC) and two subunits each of ACCase subunit alpha (AccA) and ACCase subunit beta (AccD).

The protein localises to the cytoplasm. The catalysed reaction is N(6)-carboxybiotinyl-L-lysyl-[protein] + acetyl-CoA = N(6)-biotinyl-L-lysyl-[protein] + malonyl-CoA. Its pathway is lipid metabolism; malonyl-CoA biosynthesis; malonyl-CoA from acetyl-CoA: step 1/1. Its function is as follows. Component of the acetyl coenzyme A carboxylase (ACC) complex. First, biotin carboxylase catalyzes the carboxylation of biotin on its carrier protein (BCCP) and then the CO(2) group is transferred by the carboxyltransferase to acetyl-CoA to form malonyl-CoA. In Histophilus somni (strain 2336) (Haemophilus somnus), this protein is Acetyl-coenzyme A carboxylase carboxyl transferase subunit alpha.